We begin with the raw amino-acid sequence, 86 residues long: Small ribosomal subunit protein bS20 (86 aa).

Residues 1-25 (MANIKSQQKRNRTNERARLRNKAVK) form a disordered region.

This sequence belongs to the bacterial ribosomal protein bS20 family.

Binds directly to 16S ribosomal RNA. The protein is Small ribosomal subunit protein bS20 of Mycobacterium bovis (strain ATCC BAA-935 / AF2122/97).